The sequence spans 362 residues: 3-isopropylmalate dehydrogenase (362 aa).

78–91 is a binding site for NAD(+); that stretch reads GYKWDSLPPHQRPE. Residues Arg98, Arg108, Arg136, and Asp226 each coordinate substrate. Mg(2+) contacts are provided by Asp226, Asp250, and Asp254. 284-296 lines the NAD(+) pocket; sequence GSAPDIAGQDKAN.

The protein belongs to the isocitrate and isopropylmalate dehydrogenases family. LeuB type 1 subfamily. Homodimer. The cofactor is Mg(2+). Mn(2+) is required as a cofactor.

It is found in the cytoplasm. It catalyses the reaction (2R,3S)-3-isopropylmalate + NAD(+) = 4-methyl-2-oxopentanoate + CO2 + NADH. It participates in amino-acid biosynthesis; L-leucine biosynthesis; L-leucine from 3-methyl-2-oxobutanoate: step 3/4. In terms of biological role, catalyzes the oxidation of 3-carboxy-2-hydroxy-4-methylpentanoate (3-isopropylmalate) to 3-carboxy-4-methyl-2-oxopentanoate. The product decarboxylates to 4-methyl-2 oxopentanoate. This Nostoc sp. (strain PCC 7120 / SAG 25.82 / UTEX 2576) protein is 3-isopropylmalate dehydrogenase.